We begin with the raw amino-acid sequence, 439 residues long: Fibulin-7 (439 aa).

A signal peptide spans 1-24 (MVPSSPRALFLLLLILACPEPRAS). Positions 28-53 (LSKQQLLSAIRQLQQLLKGQETRFAE) form a coiled coil. The region spanning 79–136 (VSCPALNTPADGRKFGSKYLVDHEVHFTCNPGFRLVGPSSVVCLPNGTWTGEQPHCRG) is the Sushi domain. Cystine bridges form between C81–C121, C107–C134, C140–C151, C145–C160, C162–C171, C228–C244, C240–C253, C255–C268, C274–C287, C281–C296, and C301–C318. Residue N124 is glycosylated (N-linked (GlcNAc...) asparagine). Residues 136–172 (GISECSSQPCQNGGTCVEGVNQYRCICPPGRTGNRCQ) form the EGF-like 1; calcium-binding domain. An EGF-like 2; calcium-binding domain is found at 224–269 (DVNECELYGQEGRPRLCMHACVNTPGSYRCTCPGGYRTLADGKSCE). The 50-residue stretch at 270–319 (DVDECVGLQPVCPQGTTCINTGGSFQCVSPECPEGSGNVSYVKTSPFQCE) folds into the EGF-like 3; calcium-binding domain. Residue N307 is glycosylated (N-linked (GlcNAc...) asparagine).

It belongs to the fibulin family. Interacts with heparin, FBLN1, FN1 and DSPP. Preferentially binds dental mesenchyme cells and odontoblasts but not dental epithelial cells or nondental cells. Binding requires a heparan sulfate-containing receptor on the cell surface as well as an integrin. N-glycosylated.

The protein localises to the secreted. It is found in the extracellular space. Its subcellular location is the extracellular matrix. In terms of biological role, an adhesion molecule that interacts with extracellular matrix molecules in developing teeth and may play important roles in differentiation and maintenance of odontoblasts as well as in dentin formation. The sequence is that of Fibulin-7 (FBLN7) from Homo sapiens (Human).